The chain runs to 268 residues: Hydroxyethylthiazole kinase (268 aa).

A substrate-binding site is contributed by Met44. Positions 119 and 165 each coordinate ATP. Gly192 is a substrate binding site.

This sequence belongs to the Thz kinase family. The cofactor is Mg(2+).

It catalyses the reaction 5-(2-hydroxyethyl)-4-methylthiazole + ATP = 4-methyl-5-(2-phosphooxyethyl)-thiazole + ADP + H(+). It participates in cofactor biosynthesis; thiamine diphosphate biosynthesis; 4-methyl-5-(2-phosphoethyl)-thiazole from 5-(2-hydroxyethyl)-4-methylthiazole: step 1/1. Catalyzes the phosphorylation of the hydroxyl group of 4-methyl-5-beta-hydroxyethylthiazole (THZ). This Corynebacterium glutamicum (strain R) protein is Hydroxyethylthiazole kinase.